A 118-amino-acid chain; its full sequence is Holo-[acyl-carrier-protein] synthase (118 aa).

Residues Asp9 and Glu52 each contribute to the Mg(2+) site.

This sequence belongs to the P-Pant transferase superfamily. AcpS family. Mg(2+) is required as a cofactor.

The protein localises to the cytoplasm. The catalysed reaction is apo-[ACP] + CoA = holo-[ACP] + adenosine 3',5'-bisphosphate + H(+). Its function is as follows. Transfers the 4'-phosphopantetheine moiety from coenzyme A to a Ser of acyl-carrier-protein. This chain is Holo-[acyl-carrier-protein] synthase, found in Frankia alni (strain DSM 45986 / CECT 9034 / ACN14a).